A 333-amino-acid chain; its full sequence is Taste receptor type 2 member 38 (333 aa).

Over 1–17 (MLTLTRIRTVSYEVRST) the chain is Extracellular. The helical transmembrane segment at 18-38 (FLFISVLEFAVGFLTNAFVFL) threads the bilayer. The Cytoplasmic segment spans residues 39–55 (VNFWDVVKRQPLSNSDC). A helical membrane pass occupies residues 56–76 (VLLCLSISRLFLHGLLFLSAI). Topologically, residues 77–94 (QLTHFQKLSEPLNHSYQA) are extracellular. Residues 95–115 (IIMLWMIANQANLWLAACLSL) form a helical membrane-spanning segment. Topologically, residues 116–142 (LYCSKLIRFSHTFLICLASWVSRKISQ) are cytoplasmic. A helical membrane pass occupies residues 143 to 163 (MLLGIILCSCICTVLCVWCFF). At 164–190 (SRPHFTVTTVLFMNNNTRLNWQIKDLN) the chain is on the extracellular side. N-linked (GlcNAc...) asparagine glycosylation occurs at asparagine 178. Residues 191–211 (LFYSFLFCYLWSVPPFLLFLV) form a helical membrane-spanning segment. Topologically, residues 212-251 (SSGMLTVSLGRHMRTMKVYIRDSRDPSLEAHIKALKSLVS) are cytoplasmic. Residues 252–272 (FFCFFVISSCAAFISVPLLIL) form a helical membrane-spanning segment. The Extracellular portion of the chain corresponds to 273 to 276 (WRDK). A helical membrane pass occupies residues 277 to 297 (IGVMVCVGIMAACPSGHAAVL). Over 298-333 (ISGNAKLRRAVTTILLWAQSSLKVRADHKADSRTPC) the chain is Cytoplasmic.

It belongs to the G-protein coupled receptor T2R family.

It localises to the membrane. Its function is as follows. Receptor that may play a role in the perception of bitterness and is gustducin-linked. May play a role in sensing the chemical composition of the gastrointestinal content. The activity of this receptor may stimulate alpha gustducin, mediate PLC-beta-2 activation and lead to the gating of TRPM5. The chain is Taste receptor type 2 member 38 (TAS2R38) from Gorilla gorilla gorilla (Western lowland gorilla).